A 127-amino-acid polypeptide reads, in one-letter code: Multifunctional methyltransferase subunit trm112 (127 aa).

One can recognise a TRM112 domain in the interval Lys-2–Pro-123.

Belongs to the TRM112 family. Heterodimer of mtq2-rmt-1/trm112, forming the eRF1 methyltransferase. Rmt-1/trm112 is necessary for the solubility and activity of the catalytic subunit mtq2. Interacts with trm11; required for full tRNA methyltransferase activity. Interacts with bud23; required for full rRNA methyltransferase activity.

The protein localises to the cytoplasm. The protein resides in the nucleus. In terms of biological role, acts as an activator of both rRNA/tRNA and protein methyltransferases. Together with methyltransferase mtq2, required for the methylation of eRF1 on 'Gln-182'. Together with methyltransferase trm11, required for the formation of 2-methylguanosine at position 10 (m2G10) in tRNA. Together with methyltransferase bud23, required for the formation of a 7-methylguanine in 18S rRNA. Involved in biogenesis of both 40S and 60S ribosomal subunits. The polypeptide is Multifunctional methyltransferase subunit trm112 (rmt-1) (Neurospora crassa (strain ATCC 24698 / 74-OR23-1A / CBS 708.71 / DSM 1257 / FGSC 987)).